The chain runs to 450 residues: Alpha-2B adrenergic receptor (450 aa).

Over 1-12 the chain is Extracellular; that stretch reads MDHQDPYSVQAT. Residues 13–38 traverse the membrane as a helical segment; the sequence is AAIAAAITFLILFTIFGNALVILAVL. The Cytoplasmic segment spans residues 39-48; that stretch reads TSRSLRAPQN. Residues 49 to 69 form a helical membrane-spanning segment; the sequence is LFLVSLAAADILVATLIIPFS. Residues 70–86 lie on the Extracellular side of the membrane; it reads LANELLGYWYFRRTWCE. C85 and C164 are oxidised to a cystine. A helical transmembrane segment spans residues 87–107; the sequence is VYLALDVLFCTSSIVHLCAIS. The Cytoplasmic segment spans residues 108–128; sequence LDRYWAVSRALEYNSKRTPRR. A helical transmembrane segment spans residues 129-149; it reads IKCIILTVWLIAAVISLPPLI. Over 150–172 the chain is Extracellular; that stretch reads YKGDQGPQPRGRPQCKLNQEAWY. Residues 173 to 193 form a helical membrane-spanning segment; sequence ILASSIGSFFAPCLIMILVYL. Residues 194 to 368 lie on the Cytoplasmic side of the membrane; sequence RIYLIAKRSN…RRAQLTREKR (175 aa). Disordered stretches follow at residues 204–229 and 241–329; these read RRGP…GGAL and ASAR…PLQQ. The span at 246-256 shows a compositional bias: basic and acidic residues; that stretch reads VNGHSKSTGEK. The segment covering 293 to 311 has biased composition (acidic residues); the sequence is PEDEAEEEEEEEEEEEECE. Positions 312–326 are enriched in low complexity; it reads PQAVPVSPASACSPP. Residues 369–389 traverse the membrane as a helical segment; that stretch reads FTFVLAVVIGVFVLCWFPFFF. Topologically, residues 390-405 are extracellular; that stretch reads SYSLGAICPKHCKVPH. A helical transmembrane segment spans residues 406–426; that stretch reads GLFQFFFWIGYCNSSLNPVIY. Over 427-450 the chain is Cytoplasmic; sequence TIFNQDFRRAFRRILCRPWTQTAW. The S-palmitoyl cysteine moiety is linked to residue C442.

This sequence belongs to the G-protein coupled receptor 1 family. Adrenergic receptor subfamily. ADRA2B sub-subfamily. In terms of assembly, interacts with RAB26. Interacts with PPP1R9B. Interacts with GGA1, GGA2 and GGA3.

The protein resides in the cell membrane. In terms of biological role, alpha-2 adrenergic receptors mediate the catecholamine-induced inhibition of adenylate cyclase through the action of G proteins. The rank order of potency for agonists of this receptor is clonidine &gt; norepinephrine &gt; epinephrine = oxymetazoline &gt; dopamine &gt; p-tyramine = phenylephrine &gt; serotonin &gt; p-synephrine / p-octopamine. For antagonists, the rank order is yohimbine &gt; chlorpromazine &gt; phentolamine &gt; mianserine &gt; spiperone &gt; prazosin &gt; alprenolol &gt; propanolol &gt; pindolol. The sequence is that of Alpha-2B adrenergic receptor (ADRA2B) from Homo sapiens (Human).